A 67-amino-acid chain; its full sequence is DNA gyrase inhibitor YacG (67 aa).

The Zn(2+) site is built by Cys8, Cys11, Cys27, and Cys31.

It belongs to the DNA gyrase inhibitor YacG family. In terms of assembly, interacts with GyrB. Zn(2+) is required as a cofactor.

Inhibits all the catalytic activities of DNA gyrase by preventing its interaction with DNA. Acts by binding directly to the C-terminal domain of GyrB, which probably disrupts DNA binding by the gyrase. The sequence is that of DNA gyrase inhibitor YacG from Ralstonia pickettii (strain 12J).